We begin with the raw amino-acid sequence, 720 residues long: 1,4-alpha-glucan branching enzyme GlgB (720 aa).

Catalysis depends on Asp400, which acts as the Nucleophile. Glu453 acts as the Proton donor in catalysis.

It belongs to the glycosyl hydrolase 13 family. GlgB subfamily. Monomer.

It catalyses the reaction Transfers a segment of a (1-&gt;4)-alpha-D-glucan chain to a primary hydroxy group in a similar glucan chain.. It functions in the pathway glycan biosynthesis; glycogen biosynthesis. Catalyzes the formation of the alpha-1,6-glucosidic linkages in glycogen by scission of a 1,4-alpha-linked oligosaccharide from growing alpha-1,4-glucan chains and the subsequent attachment of the oligosaccharide to the alpha-1,6 position. This Chlamydia pneumoniae (Chlamydophila pneumoniae) protein is 1,4-alpha-glucan branching enzyme GlgB.